Consider the following 366-residue polypeptide: 4-hydroxy-3-methylbut-2-en-1-yl diphosphate synthase (flavodoxin) (366 aa).

Cys270, Cys273, Cys305, and Glu312 together coordinate [4Fe-4S] cluster.

It belongs to the IspG family. Requires [4Fe-4S] cluster as cofactor.

The enzyme catalyses (2E)-4-hydroxy-3-methylbut-2-enyl diphosphate + oxidized [flavodoxin] + H2O + 2 H(+) = 2-C-methyl-D-erythritol 2,4-cyclic diphosphate + reduced [flavodoxin]. It functions in the pathway isoprenoid biosynthesis; isopentenyl diphosphate biosynthesis via DXP pathway; isopentenyl diphosphate from 1-deoxy-D-xylulose 5-phosphate: step 5/6. In terms of biological role, converts 2C-methyl-D-erythritol 2,4-cyclodiphosphate (ME-2,4cPP) into 1-hydroxy-2-methyl-2-(E)-butenyl 4-diphosphate. This Acidithiobacillus ferrooxidans (strain ATCC 53993 / BNL-5-31) (Leptospirillum ferrooxidans (ATCC 53993)) protein is 4-hydroxy-3-methylbut-2-en-1-yl diphosphate synthase (flavodoxin).